A 116-amino-acid polypeptide reads, in one-letter code: uncharacterized protein (116 aa).

A disordered region spans residues 97 to 116 (AKGKGNEGREEAEEASGKSK). Positions 100 to 116 (KGNEGREEAEEASGKSK) are enriched in basic and acidic residues.

It belongs to the UPF0440 family.

This is an uncharacterized protein from Pyrococcus horikoshii (strain ATCC 700860 / DSM 12428 / JCM 9974 / NBRC 100139 / OT-3).